The sequence spans 193 residues: Holliday junction branch migration complex subunit RuvA (193 aa).

The domain I stretch occupies residues 1–64 (MIGRIQGTLV…EDAQQLFGFA (64 aa)). Positions 65 to 139 (TETEREAFRQ…GKLAPDLGVA (75 aa)) are domain II. Positions 139-143 (AGGKP) are flexible linker. Residues 144-193 (QAIETSSEVLQALLALGYSEKEALLALKQIPADTSISDGIRMGLKYLSKA) form a domain III region.

Belongs to the RuvA family. In terms of assembly, homotetramer. Forms an RuvA(8)-RuvB(12)-Holliday junction (HJ) complex. HJ DNA is sandwiched between 2 RuvA tetramers; dsDNA enters through RuvA and exits via RuvB. An RuvB hexamer assembles on each DNA strand where it exits the tetramer. Each RuvB hexamer is contacted by two RuvA subunits (via domain III) on 2 adjacent RuvB subunits; this complex drives branch migration. In the full resolvosome a probable DNA-RuvA(4)-RuvB(12)-RuvC(2) complex forms which resolves the HJ.

It localises to the cytoplasm. Its function is as follows. The RuvA-RuvB-RuvC complex processes Holliday junction (HJ) DNA during genetic recombination and DNA repair, while the RuvA-RuvB complex plays an important role in the rescue of blocked DNA replication forks via replication fork reversal (RFR). RuvA specifically binds to HJ cruciform DNA, conferring on it an open structure. The RuvB hexamer acts as an ATP-dependent pump, pulling dsDNA into and through the RuvAB complex. HJ branch migration allows RuvC to scan DNA until it finds its consensus sequence, where it cleaves and resolves the cruciform DNA. This is Holliday junction branch migration complex subunit RuvA from Polynucleobacter necessarius subsp. necessarius (strain STIR1).